Reading from the N-terminus, the 186-residue chain is Adenylate kinase (186 aa).

14-19 contacts ATP; that stretch reads GAGKGT. The segment at 34-63 is NMP; sequence STGDILRDHVARGTPLGERVRPIMERGDLV. AMP contacts are provided by residues threonine 35, arginine 40, 61 to 63, 84 to 87, and glutamine 91; these read DLV and GFPR. Residues 125-135 are LID; sequence RRAELEGRSDD. Residue arginine 126 participates in ATP binding. AMP contacts are provided by arginine 132 and arginine 143. Residue glycine 171 coordinates ATP.

It belongs to the adenylate kinase family. Monomer.

It localises to the cytoplasm. It catalyses the reaction AMP + ATP = 2 ADP. Its pathway is purine metabolism; AMP biosynthesis via salvage pathway; AMP from ADP: step 1/1. In terms of biological role, catalyzes the reversible transfer of the terminal phosphate group between ATP and AMP. Plays an important role in cellular energy homeostasis and in adenine nucleotide metabolism. The protein is Adenylate kinase of Thermus thermophilus (strain ATCC BAA-163 / DSM 7039 / HB27).